A 445-amino-acid polypeptide reads, in one-letter code: Probable phosphoglucosamine mutase (445 aa).

Residue serine 99 is the Phosphoserine intermediate of the active site. The Mg(2+) site is built by serine 99, aspartate 238, aspartate 240, and aspartate 242. Serine 99 carries the phosphoserine modification.

Belongs to the phosphohexose mutase family. Mg(2+) serves as cofactor. Activated by phosphorylation.

It catalyses the reaction alpha-D-glucosamine 1-phosphate = D-glucosamine 6-phosphate. In terms of biological role, catalyzes the conversion of glucosamine-6-phosphate to glucosamine-1-phosphate. The chain is Probable phosphoglucosamine mutase from Methanobrevibacter smithii (strain ATCC 35061 / DSM 861 / OCM 144 / PS).